We begin with the raw amino-acid sequence, 880 residues long: Pentatricopeptide repeat-containing protein At3g07290, mitochondrial (880 aa).

The N-terminal 89 residues, 1–89 (MLLIHIRSTR…RSDNDICVRF (89 aa)), are a transit peptide targeting the mitochondrion. PPR repeat units follow at residues 159–193 (NYPCYSSLLMSLAKLDLGFLAYVTYRRMEADGFVV), 194–228 (GMIDYRTIVNALCKNGYTEAAEMFMSKILKIGFVL), 229–259 (DSHIGTSLLLGFCRGLNLRDALKVFDVMSKE), 265–299 (NSVSYSILIHGLCEVGRLEEAFGLKDQMGEKGCQP), 300–334 (STRTYTVLIKALCDRGLIDKAFNLFDEMIPRGCKP), 335–369 (NVHTYTVLIDGLCRDGKIEEANGVCRKMVKDRIFP), 370–404 (SVITYNALINGYCKDGRVVPAFELLTVMEKRACKP), 405–439 (NVRTFNELMEGLCRVGKPYKAVHLLKRMLDNGLSP), 440–474 (DIVSYNVLIDGLCREGHMNTAYKLLSSMNCFDIEP), 475–509 (DCLTFTAIINAFCKQGKADVASAFLGLMLRKGISL), 510–544 (DEVTGTTLIDGVCKVGKTRDALFILETLVKMRILT), 545–579 (TPHSLNVILDMLSKGCKVKEELAMLGKINKLGLVP), 580–614 (SVVTYTTLVDGLIRSGDITGSFRILELMKLSGCLP), 615–649 (NVYPYTIIINGLCQFGRVEEAEKLLSAMQDSGVSP), 650–684 (NHVTYTVMVKGYVNNGKLDRALETVRAMVERGYEL), 685–721 (NDRIYSSLLQGFVLSQKGIDNSEESTVSDIALRETDP), 738–768 (ISGLCIFLVTRLCKEGRTDESNDLVQNVLER), 772–806 (LEKAMDIIMESYCSKKKHTKCMELITLVLKSGFVP), and 807–842 (SFKSFCLVIQGLKKEGDAERARELVMELLTSNGVVE).

The protein belongs to the PPR family. P subfamily.

The protein resides in the mitochondrion. This chain is Pentatricopeptide repeat-containing protein At3g07290, mitochondrial, found in Arabidopsis thaliana (Mouse-ear cress).